The chain runs to 39 residues: Contryphan-Cal3 (39 aa).

Positions 1–20 (MTRTAVLLLTLLFLVAMAAS) are cleaved as a signal peptide. Cys29 and Cys35 are joined by a disulfide.

Expressed by the venom duct.

Its subcellular location is the secreted. In terms of biological role, probable neurotoxin. In Californiconus californicus (California cone), this protein is Contryphan-Cal3.